The following is a 184-amino-acid chain: Alpha-tubulin N-acetyltransferase (184 aa).

Residues 1–174 (MDTHGEKMKN…NNFVIFAEYF (174 aa)) enclose the N-acetyltransferase domain. Residues 108–121 (FYIRRDFRKRGLGL) and 144–153 (SHKLRSFLKK) each bind acetyl-CoA.

It belongs to the acetyltransferase ATAT1 family.

The enzyme catalyses L-lysyl-[alpha-tubulin] + acetyl-CoA = N(6)-acetyl-L-lysyl-[alpha-tubulin] + CoA + H(+). Specifically acetylates 'Lys-40' in alpha-tubulin on the lumenal side of microtubules. Promotes microtubule destabilization and accelerates microtubule dynamics; this activity may be independent of acetylation activity. Acetylates alpha-tubulin with a slow enzymatic rate, due to a catalytic site that is not optimized for acetyl transfer. Enters the microtubule through each end and diffuses quickly throughout the lumen of microtubules. Acetylates only long/old microtubules because of its slow acetylation rate since it does not have time to act on dynamically unstable microtubules before the enzyme is released. In Plasmodium vivax (strain Salvador I), this protein is Alpha-tubulin N-acetyltransferase.